The chain runs to 180 residues: UPF0340 protein YwlG (180 aa).

The protein belongs to the UPF0340 family.

The polypeptide is UPF0340 protein YwlG (ywlG) (Bacillus subtilis (strain 168)).